The primary structure comprises 307 residues: MFKRQLSTSVRYLQHYDESLLSRYYPESLLKSIKLAQQTIPEDTKFRVSRNVEFAPPYLDDFTKIHPFWDYKPGMPHLHAQEENNNFSIFRWDQVQQPLPGEGNILPPGVSLPNDGGRKSKSADVAAGLHKQTGVDPDYITRKLTMKPLVMKRVSNQTGKGKIASFYALVVVGDKNGMVGLGEGKSREEMSKAIFKAHWDAVRNLKEIPRYENRTIYGDIDFRYHGVKLHLRSAKPGFGLRVNHVIFEICECAGIKDLSGKVYKSRNDMNIAKGTIEAFTKAQKTLDEVALGRGKKLVDVRKVYYSS.

Residues 1–13 (MFKRQLSTSVRYL) constitute a mitochondrion transit peptide. Positions 144–208 (LTMKPLVMKR…WDAVRNLKEI (65 aa)) constitute an S5 DRBM domain.

The protein belongs to the universal ribosomal protein uS5 family. As to quaternary structure, component of the mitochondrial small ribosomal subunit (mt-SSU). Mature yeast 74S mitochondrial ribosomes consist of a small (37S) and a large (54S) subunit. The 37S small subunit contains a 15S ribosomal RNA (15S mt-rRNA) and 34 different proteins. The 54S large subunit contains a 21S rRNA (21S mt-rRNA) and 46 different proteins. uS3m, uS4m and uS5m form the narrow entry site of the mRNA channel.

The protein resides in the mitochondrion. In terms of biological role, component of the mitochondrial ribosome (mitoribosome), a dedicated translation machinery responsible for the synthesis of mitochondrial genome-encoded proteins, including at least some of the essential transmembrane subunits of the mitochondrial respiratory chain. The mitoribosomes are attached to the mitochondrial inner membrane and translation products are cotranslationally integrated into the membrane. The polypeptide is Small ribosomal subunit protein uS5m (MRPS5) (Saccharomyces cerevisiae (strain ATCC 204508 / S288c) (Baker's yeast)).